A 189-amino-acid chain; its full sequence is uncharacterized protein (189 aa).

Helical transmembrane passes span 4–21, 34–56, 79–101, 122–144, and 148–170; these read AIST…FLFR, AFYP…PLIL, LLVI…LIYS, RILS…VLLN, and ILHV…NLLV.

It localises to the cell membrane. This is an uncharacterized protein from Archaeoglobus fulgidus (strain ATCC 49558 / DSM 4304 / JCM 9628 / NBRC 100126 / VC-16).